A 312-amino-acid polypeptide reads, in one-letter code: Taste receptor type 2 member 9 (312 aa).

The Extracellular portion of the chain corresponds to methionine 1–tyrosine 9. A helical transmembrane segment spans residues isoleucine 10 to cysteine 32. Topologically, residues isoleucine 33–alanine 52 are cytoplasmic. The chain crosses the membrane as a helical span at residues isoleucine 53–phenylalanine 72. Over proline 73 to asparagine 86 the chain is Extracellular. A helical transmembrane segment spans residues valine 87–leucine 109. Over lysine 110–lysine 128 the chain is Cytoplasmic. A helical membrane pass occupies residues valine 129–valine 146. Residues proline 147–glutamine 180 lie on the Extracellular side of the membrane. N-linked (GlcNAc...) asparagine glycosylation is present at asparagine 164. Residues leucine 181–phenylalanine 203 traverse the membrane as a helical segment. Over serine 204 to valine 234 the chain is Cytoplasmic. The chain crosses the membrane as a helical span at residues isoleucine 235 to isoleucine 257. The Extracellular segment spans residues proline 258 to lysine 261. Residues leucine 262–methionine 284 traverse the membrane as a helical segment. At glycine 285–proline 312 the chain is on the cytoplasmic side.

Belongs to the G-protein coupled receptor T2R family. Expressed in subsets of taste receptor cells of the tongue and palate epithelium and exclusively in gustducin-positive cells.

The protein resides in the membrane. Its function is as follows. Gustducin-coupled receptor implicated in the perception of bitter compounds in the oral cavity and the gastrointestinal tract. Signals through PLCB2 and the calcium-regulated cation channel TRPM5. The sequence is that of Taste receptor type 2 member 9 (TAS2R9) from Homo sapiens (Human).